Here is a 432-residue protein sequence, read N- to C-terminus: MDWDLNAAGAWDLAELERDHAAAAPSSGGHAANAAAAGTGTESRPPAPGAAGAPAECSVDLKLGGMGECEPGAARREREAAAGAAKRPRPAGPGGQQQQQQCPSCAVDGCRADLGKCRDYHRRHKVCEAHSKTPVVVVAGREMRFCQQCSRFHLLAEFDADKRSCRKRLDGHNRRRRKPQPDTMASASFIASQQGTRFSPFAHPRLEASWPPGVMKTEESPYHITHQIPLGSSSSSRQQHFVALGAATPAYAKEGRRFPFLQEGEISFATGVVLEPPAAAPACQPLLRTGAPSESSGAGGSKMFSDQGLARVLDSDCALSLLSAPANSSGIDVSRMVRPTEHVPMAQQPVVPGLQFGSASWFPRPQASTGGSFVPSCPAAVEGEQQLNAVLGPNDSEVSMNYGGMFHVGGGSGGGEGSSDGGTSSSMPFSWQ.

2 disordered regions span residues 20–55 (HAAA…GAPA) and 68–102 (ECEP…QQQC). Residues 22-41 (AAAPSSGGHAANAAAAGTGT) are compositionally biased toward low complexity. The SBP-type zinc finger occupies 102-179 (CPSCAVDGCR…DGHNRRRRKP (78 aa)). Zn(2+)-binding residues include Cys-105, Cys-110, Cys-127, His-130, Cys-146, Cys-149, His-153, and Cys-165. The segment covering 409–420 (GGGSGGGEGSSD) has biased composition (gly residues). A disordered region spans residues 409-432 (GGGSGGGEGSSDGGTSSSMPFSWQ).

As to quaternary structure, monomer and homodimer. In terms of tissue distribution, strongly expressed in immature ears and weakly in husks. Found in the inflorescence meristem of the developing ear, in the spikelet pair primordia, the glume primordia, the cupule forming region and other floral organs. Not detected in other tissues.

Its function is as follows. SBP transcriptional regulator probably involved in the domestication of maize. Acts as a transcriptional repressor binding to a 5'-GTAC-3' motif. May repress the growth of lateral branches in length and numbers. The chain is Teosinte glume architecture 1 from Zea mays (Maize).